We begin with the raw amino-acid sequence, 625 residues long: Serine/threonine-protein kinase PknB (625 aa).

The Cytoplasmic portion of the chain corresponds to 1–331 (MTTPQHLSDR…KQRSTSVARW (331 aa)). Residues 11-274 (YELGEILGFG…TAAEMRADLI (264 aa)) enclose the Protein kinase domain. Residues 17–25 (LGFGGMSEV), lysine 40, and 93–95 (EYV) contribute to the ATP site. Aspartate 138 functions as the Proton acceptor in the catalytic mechanism. ATP contacts are provided by residues 140 to 143 (KPAN) and aspartate 156. The Mg(2+) site is built by asparagine 143 and aspartate 156. The residue at position 169 (serine 169) is a Phosphoserine; by autocatalysis. 3 positions are modified to phosphothreonine; by autocatalysis: threonine 171, threonine 173, and threonine 294. Serine 295 carries the phosphoserine; by autocatalysis modification. The disordered stretch occupies residues 302–321 (ADRAGAATQDMPVPRPAGYS). At threonine 309 the chain carries Phosphothreonine; by autocatalysis. A helical membrane pass occupies residues 332–352 (LIAVAVLAVLTVVVTVAINMV). Topologically, residues 353–625 (GGNPRNVQVP…DAKITLSFAA (273 aa)) are extracellular. 4 consecutive PASTA domains span residues 355–421 (NPRN…NVST), 422–489 (GPEQ…VVGA), 490–556 (GPED…RVSK), and 557–625 (GNQF…SFAA). Residues 591 to 612 (DVRDSGQRTNAVVTQSPSAGTP) form a disordered region. The segment covering 597–611 (QRTNAVVTQSPSAGT) has biased composition (polar residues).

Belongs to the protein kinase superfamily. Ser/Thr protein kinase family. As to quaternary structure, homodimer. Post-translationally, autophosphorylated. Dephosphorylated by PstP.

The protein localises to the cell membrane. It catalyses the reaction L-seryl-[protein] + ATP = O-phospho-L-seryl-[protein] + ADP + H(+). It carries out the reaction L-threonyl-[protein] + ATP = O-phospho-L-threonyl-[protein] + ADP + H(+). By K-252a. Its function is as follows. Protein kinase that regulates many aspects of mycobacterial physiology. Is a key component of a signal transduction pathway that regulates cell growth, cell shape and cell division via phosphorylation of target proteins. Probably phosphorylates RseA. The polypeptide is Serine/threonine-protein kinase PknB (pknB) (Mycolicibacterium smegmatis (strain ATCC 700084 / mc(2)155) (Mycobacterium smegmatis)).